A 467-amino-acid polypeptide reads, in one-letter code: Uronate isomerase (467 aa).

Belongs to the metallo-dependent hydrolases superfamily. Uronate isomerase family.

The catalysed reaction is D-glucuronate = D-fructuronate. The enzyme catalyses aldehydo-D-galacturonate = keto-D-tagaturonate. It participates in carbohydrate metabolism; pentose and glucuronate interconversion. This is Uronate isomerase from Haemophilus influenzae (strain PittGG).